The sequence spans 170 residues: Cyclic pyranopterin monophosphate synthase (170 aa).

Residues 75–77 (MCH) and 115–116 (ME) contribute to the substrate site. Residue Asp-130 is part of the active site.

The protein belongs to the MoaC family. As to quaternary structure, homohexamer; trimer of dimers.

It catalyses the reaction (8S)-3',8-cyclo-7,8-dihydroguanosine 5'-triphosphate = cyclic pyranopterin phosphate + diphosphate. It functions in the pathway cofactor biosynthesis; molybdopterin biosynthesis. Its function is as follows. Catalyzes the conversion of (8S)-3',8-cyclo-7,8-dihydroguanosine 5'-triphosphate to cyclic pyranopterin monophosphate (cPMP). The chain is Cyclic pyranopterin monophosphate synthase from Bacillus velezensis (strain DSM 23117 / BGSC 10A6 / LMG 26770 / FZB42) (Bacillus amyloliquefaciens subsp. plantarum).